A 566-amino-acid polypeptide reads, in one-letter code: Lamin-1 (566 aa).

The interval 1–37 is disordered; the sequence is MSSRKGTRSSRIVTLERSANSSLSNNGGGDDSFGSTL. Position 2 is an N-acetylserine (Ser-2). The segment at 13-47 is head; sequence VTLERSANSSLSNNGGGDDSFGSTLLETSRLQEKD. The IF rod domain maps to 45 to 387; it reads EKDHLTSLNS…ALLEGEEERL (343 aa). Residues 48–82 form a coil 1A region; that stretch reads HLTSLNSRLATYIDKVRQLEQENNRLQVQIRDIEV. Positions 83–94 are linker 1; that stretch reads VEKKEKSNLADR. Residues 95-228 are coil 1B; the sequence is FEAEKARLRR…AFALQQHKGE (134 aa). Residues 229 to 256 form a linker 2 region; it reads LEEVRHKRQVDMTTYAKQINDEYQSKLQ. The segment at 257-385 is coil 2; the sequence is DQIEEMRAQF…YQALLEGEEE (129 aa). The tract at residues 386–566 is tail; sequence RLNLTQEAPQ…SDPADRCSIM (181 aa). The LTD domain occupies 435-550; it reads RRSKLNKETV…DTVSSITVEF (116 aa). The segment at 528 to 566 is disordered; it reads GDNPSARLEDSEGDTVSSITVEFSESSDPSDPADRCSIM. Residues 541–556 show a composition bias toward polar residues; the sequence is DTVSSITVEFSESSDP. Cysteine methyl ester is present on Cys-563. Cys-563 carries the S-farnesyl cysteine lipid modification. The propeptide at 564–566 is removed in mature form; it reads SIM.

This sequence belongs to the intermediate filament family. As to quaternary structure, interacts with LEM domain proteins lem-2 and emr-1. May interact with unc-84; this interaction may be required to complete the connection between the nuclear lamina and the cytoskeleton. Ubiquitous. Expressed in all cells, except in cells undergoing spermatogenesis.

It localises to the nucleus envelope. The protein localises to the nucleus inner membrane. Functionally, major component of the nuclear lamina, a fibrous layer on the nucleoplasmic side of the inner nuclear membrane. Provides a framework for the nuclear envelope and probably also interacts with chromatin. Essential to maintain the shape and integrity of the nucleus, and for DNA replication. Involved in spatial organization of nuclear pore complexes. It is not a target for ced-3 during apoptosis, suggesting that lamin cleavage is not essential for apoptosis in C.elegans. This Caenorhabditis elegans protein is Lamin-1.